The following is a 610-amino-acid chain: ABC transporter ATP-binding protein/permease wht-3 (610 aa).

Positions 42–277 constitute an ABC transporter domain; sequence VKTRKKLFSK…FADCGHPIPK (236 aa). 74–81 is a binding site for ATP; the sequence is GASGAGKT. A run of 5 helical transmembrane segments spans residues 396–416, 446–466, 477–497, 503–523, and 584–604; these read ALYF…MTFM, LPLF…MIGL, ILIS…LACL, LAIA…GLYG, and VIGL…ALFI.

It belongs to the ABC transporter superfamily. ABCG family. Eye pigment precursor importer (TC 3.A.1.204) subfamily.

It localises to the membrane. In terms of biological role, required for efficient RNA interference (RNAi) of pop-1 indicating a role in the germline development. The chain is ABC transporter ATP-binding protein/permease wht-3 (wht-3) from Caenorhabditis elegans.